A 705-amino-acid polypeptide reads, in one-letter code: Polyribonucleotide nucleotidyltransferase (705 aa).

Asp-487 and Asp-493 together coordinate Mg(2+). The KH domain occupies 554 to 613 (PKILTMSINPDKIRDVIGPSGKQINKIIEDTGVKIDIEQDGTIFISSTDESMNQKAKKII). The S1 motif domain occupies 623 to 691 (GQLYLGKVKR…KQGRVNLSRK (69 aa)).

It belongs to the polyribonucleotide nucleotidyltransferase family. Mg(2+) is required as a cofactor.

It is found in the cytoplasm. It catalyses the reaction RNA(n+1) + phosphate = RNA(n) + a ribonucleoside 5'-diphosphate. Functionally, involved in mRNA degradation. Catalyzes the phosphorolysis of single-stranded polyribonucleotides processively in the 3'- to 5'-direction. In Bacillus licheniformis (strain ATCC 14580 / DSM 13 / JCM 2505 / CCUG 7422 / NBRC 12200 / NCIMB 9375 / NCTC 10341 / NRRL NRS-1264 / Gibson 46), this protein is Polyribonucleotide nucleotidyltransferase.